Reading from the N-terminus, the 524-residue chain is Hydroxysteroid dehydrogenase-like protein 2 (524 aa).

NADP(+) is bound by residues Gly17–Gly23, Lys42, and Asp74. Lys42 is subject to N6-(2-hydroxyisobutyryl)lysine. An N6-acetyllysine modification is found at Lys116. Residue Tyr168 is the Proton acceptor of the active site. Lys172 provides a ligand contact to NADP(+). Residues Glu283 to Gln300 show a composition bias toward basic and acidic residues. The tract at residues Glu283–Lys410 is disordered. A compositionally biased stretch (low complexity) spans Leu301–Gln391. The region spanning Gly414–Asn521 is the SCP2 domain. Lys424 bears the N6-succinyllysine mark.

It belongs to the short-chain dehydrogenases/reductases (SDR) family.

The protein resides in the peroxisome. It is found in the mitochondrion. Functionally, has apparently no steroid dehydrogenase activity. Controls bile acid (BA) and lipid metabolism in response to nutritional cues. The chain is Hydroxysteroid dehydrogenase-like protein 2 (Hsdl2) from Rattus norvegicus (Rat).